A 40-amino-acid polypeptide reads, in one-letter code: Bomanin Short 6 (40 aa).

The N-terminal stretch at 1–18 (MKLLSITFLFGLLALASA) is a signal peptide. Residues 19-23 (NPLSP) constitute a propeptide, removed by a dipeptidylpeptidase. A disulfide bond links C32 and C35.

This sequence belongs to the bomanin family.

It localises to the secreted. Functionally, secreted immune-induced peptide induced by Toll signaling. Has a role in resistance to bacterial and fungal infections. The strength of antimicrobial activity appears to correlate with the overall level of expression. The chain is Bomanin Short 6 from Drosophila melanogaster (Fruit fly).